A 552-amino-acid chain; its full sequence is MTVGDHLVARMRAAGISVVCGLPTSRLDSLLVRLSRDAGFQIVLARHEGGAGYLADGFARASGKSAAVFVAGPGATNVISAVANASVNQVPMLILTGEVAVGEFGLHSQQDTSDDGLGLGATFRRFCRCSVSIESIANARSKIDSAFRALASIPRGPVHIALPRDLVDERLPAHQLGTAAAGLGGLRTLAPCGPDVADEVIGRLDRSRAPMLVLGNGCRLDGIGEQIVAFCEKAGLPFATTPNGRGIVAETHPLSLGVLGIFGDGRADEYLFDTPCDLLIAVGVSFGGLVTRSFSPRWRGLKADVVHVDPDPSAVGRFVATSLGITTSGRAFVNALNCGRPPRFCRRVGVRPPAPAALPGTPQARGESIHPLELMHELDRELAPNATICADVGTCISWTFRGIPVRRPGRFFATVDFSPMGCGIAGAIGVALARPEEHVICIAGDGAFLMHGTEISTAVAHGIRVTWAVLNDGQMSASAGPVSGRMDPSPVARIGANDLAAMARALGAEGIRVDTRCELRAGVQKALAATGPCVLDIAIDPEINKPDIGLGR.

E48 serves as a coordination point for thiamine diphosphate. Residues F262–S285 and D309–S328 each bind FAD. The interval T394–Q474 is thiamine pyrophosphate binding. D445 contributes to the Mg(2+) binding site.

The protein belongs to the TPP enzyme family. Heterodimer of large catalytic subunit and small regulatory subunit. The cofactor is Mg(2+). Thiamine diphosphate is required as a cofactor.

The catalysed reaction is 2 pyruvate + H(+) = (2S)-2-acetolactate + CO2. The protein operates within amino-acid biosynthesis; L-isoleucine biosynthesis; L-isoleucine from 2-oxobutanoate: step 1/4. It functions in the pathway amino-acid biosynthesis; L-valine biosynthesis; L-valine from pyruvate: step 1/4. Catalyzes the conversion of 2 pyruvate molecules into acetolactate in the first common step of the biosynthetic pathway of the branched-amino acids such as leucine, isoleucine, and valine. The chain is Putative acetolactate synthase large subunit IlvB2 (ilvB2) from Mycobacterium tuberculosis (strain ATCC 25618 / H37Rv).